The primary structure comprises 152 residues: Arginine repressor (152 aa).

It belongs to the ArgR family.

The protein localises to the cytoplasm. The protein operates within amino-acid biosynthesis; L-arginine biosynthesis [regulation]. Regulates arginine biosynthesis genes. The protein is Arginine repressor of Lachnoclostridium phytofermentans (strain ATCC 700394 / DSM 18823 / ISDg) (Clostridium phytofermentans).